Here is a 133-residue protein sequence, read N- to C-terminus: Sporulation-specific protein 2 (133 aa).

The protein belongs to the VPS13 family. Interacts with spo13 and spo15.

It is found in the cytoplasm. The protein localises to the cytoskeleton. Its subcellular location is the microtubule organizing center. It localises to the spindle pole body. Its function is as follows. Involved in sporulation. Plays a significant role in modification of the spindle pole body prior to spore formation and is required for initiating forespore membrane formation. Assists in the localization of spo13 to the outer surface of the SPB. The chain is Sporulation-specific protein 2 (spo2) from Schizosaccharomyces pombe (strain 972 / ATCC 24843) (Fission yeast).